The primary structure comprises 179 residues: Centromere protein R (179 aa).

A disordered region spans residues 1–79 (MSAKRSLKLD…RLSRRGQPQT (79 aa)). Residues 30 to 50 (NSYSPTTGTCQISPFSSPTSH) are compositionally biased toward polar residues. Residues 51–64 (NAEDLRNGLSHGDE) are compositionally biased toward basic and acidic residues. Residues 172 to 176 (LQLLL) carry the LXXLL motif motif.

The protein resides in the nucleus. Its subcellular location is the chromosome. It localises to the centromere. It is found in the kinetochore. Transcription coregulator that can have both coactivator and corepressor functions. Involved in the coactivation of nuclear receptors for retinoid X (RXRs) and thyroid hormone (TRs) in a ligand-dependent fashion. Probable component of a centromeric complex involved in assembly of kinetochore proteins, mitotic progression and chromosome segregation. In Gallus gallus (Chicken), this protein is Centromere protein R (CENPR).